A 281-amino-acid chain; its full sequence is Bifunctional protein FolD (281 aa).

Residues 165-167, Thr-192, and Val-233 contribute to the NADP(+) site; that span reads GRG.

The protein belongs to the tetrahydrofolate dehydrogenase/cyclohydrolase family. Homodimer.

The enzyme catalyses (6R)-5,10-methylene-5,6,7,8-tetrahydrofolate + NADP(+) = (6R)-5,10-methenyltetrahydrofolate + NADPH. It carries out the reaction (6R)-5,10-methenyltetrahydrofolate + H2O = (6R)-10-formyltetrahydrofolate + H(+). It functions in the pathway one-carbon metabolism; tetrahydrofolate interconversion. In terms of biological role, catalyzes the oxidation of 5,10-methylenetetrahydrofolate to 5,10-methenyltetrahydrofolate and then the hydrolysis of 5,10-methenyltetrahydrofolate to 10-formyltetrahydrofolate. This Mycobacteroides abscessus (strain ATCC 19977 / DSM 44196 / CCUG 20993 / CIP 104536 / JCM 13569 / NCTC 13031 / TMC 1543 / L948) (Mycobacterium abscessus) protein is Bifunctional protein FolD.